We begin with the raw amino-acid sequence, 299 residues long: ATP phosphoribosyltransferase (299 aa).

This sequence belongs to the ATP phosphoribosyltransferase family. Long subfamily. In terms of assembly, equilibrium between an active dimeric form, an inactive hexameric form and higher aggregates. Interconversion between the various forms is largely reversible and is influenced by the natural substrates and inhibitors of the enzyme. Mg(2+) is required as a cofactor.

Its subcellular location is the cytoplasm. It catalyses the reaction 1-(5-phospho-beta-D-ribosyl)-ATP + diphosphate = 5-phospho-alpha-D-ribose 1-diphosphate + ATP. The protein operates within amino-acid biosynthesis; L-histidine biosynthesis; L-histidine from 5-phospho-alpha-D-ribose 1-diphosphate: step 1/9. With respect to regulation, feedback inhibited by histidine. Functionally, catalyzes the condensation of ATP and 5-phosphoribose 1-diphosphate to form N'-(5'-phosphoribosyl)-ATP (PR-ATP). Has a crucial role in the pathway because the rate of histidine biosynthesis seems to be controlled primarily by regulation of HisG enzymatic activity. The protein is ATP phosphoribosyltransferase of Yersinia pseudotuberculosis serotype O:1b (strain IP 31758).